We begin with the raw amino-acid sequence, 596 residues long: Aspartate--tRNA(Asp/Asn) ligase (596 aa).

Glu-175 is a binding site for L-aspartate. Residues 199-202 are aspartate; it reads QQYK. L-aspartate contacts are provided by Arg-221 and His-454. 221 to 223 serves as a coordination point for ATP; sequence RDE. Glu-488 is an ATP binding site. Arg-495 is an L-aspartate binding site. 540-543 contributes to the ATP binding site; it reads GIDR.

The protein belongs to the class-II aminoacyl-tRNA synthetase family. Type 1 subfamily. Homodimer.

Its subcellular location is the cytoplasm. The enzyme catalyses tRNA(Asx) + L-aspartate + ATP = L-aspartyl-tRNA(Asx) + AMP + diphosphate. In terms of biological role, aspartyl-tRNA synthetase with relaxed tRNA specificity since it is able to aspartylate not only its cognate tRNA(Asp) but also tRNA(Asn). Reaction proceeds in two steps: L-aspartate is first activated by ATP to form Asp-AMP and then transferred to the acceptor end of tRNA(Asp/Asn). The chain is Aspartate--tRNA(Asp/Asn) ligase from Rhizobium rhizogenes (strain K84 / ATCC BAA-868) (Agrobacterium radiobacter).